Here is a 597-residue protein sequence, read N- to C-terminus: Probable potassium transport system protein Kup 1 (597 aa).

10 helical membrane-spanning segments follow: residues 23-43 (GAWLVIPAMLGGAAFLADSVL), 72-92 (LTMMITAVIIVILFAVQSRGT), 98-118 (VFGSVVMVWFAFLAIVGVVAI), 143-163 (ATGLALMGTVFLSTTGAEALY), 174-194 (IYFTWPFIKVALVLNYFGQGA), 226-246 (AVVLSVTAGIIASQALITGAF), 273-293 (LYIPVVNVVLCVATLAVLLLF), 303-323 (YGLALTITMITTTILLGIYLW), 329-349 (FGAVVFTIVFLAIQVLFFAAS), and 353-373 (FLHGGWFTLLLTLAILMIMYT).

It belongs to the HAK/KUP transporter (TC 2.A.72) family.

Its subcellular location is the cell membrane. The enzyme catalyses K(+)(in) + H(+)(in) = K(+)(out) + H(+)(out). Functionally, transport of potassium into the cell. Likely operates as a K(+):H(+) symporter. The polypeptide is Probable potassium transport system protein Kup 1 (kup1) (Bifidobacterium longum (strain NCC 2705)).